Here is a 350-residue protein sequence, read N- to C-terminus: Phosphotriesterase-related protein (350 aa).

Residues His22, His24, Glu169, His201, His230, and Asp298 each coordinate a divalent metal cation.

It belongs to the metallo-dependent hydrolases superfamily. Phosphotriesterase family. A divalent metal cation serves as cofactor.

The protein is Phosphotriesterase-related protein of Drosophila ananassae (Fruit fly).